Reading from the N-terminus, the 335-residue chain is Beta-ketoacyl-[acyl-carrier-protein] synthase III 2 (335 aa).

Active-site residues include Cys116 and His256. Positions 257–261 (QANVR) are ACP-binding. Asn286 is an active-site residue.

Belongs to the thiolase-like superfamily. FabH family. Homodimer.

It is found in the cytoplasm. It catalyses the reaction malonyl-[ACP] + acetyl-CoA + H(+) = 3-oxobutanoyl-[ACP] + CO2 + CoA. It participates in lipid metabolism; fatty acid biosynthesis. Catalyzes the condensation reaction of fatty acid synthesis by the addition to an acyl acceptor of two carbons from malonyl-ACP. Catalyzes the first condensation reaction which initiates fatty acid synthesis and may therefore play a role in governing the total rate of fatty acid production. Possesses both acetoacetyl-ACP synthase and acetyl transacylase activities. Its substrate specificity determines the biosynthesis of branched-chain and/or straight-chain of fatty acids. The sequence is that of Beta-ketoacyl-[acyl-carrier-protein] synthase III 2 from Bacteroides thetaiotaomicron (strain ATCC 29148 / DSM 2079 / JCM 5827 / CCUG 10774 / NCTC 10582 / VPI-5482 / E50).